A 677-amino-acid polypeptide reads, in one-letter code: MAKPRGRKLLKKQQKDQFEPSNDVEKFEDDRDHQENVYQGDAADSEKSSDPQMFFGVLDREELEYFKQIESTLAMDTFESSEEKSQMVTNVLQEAKGKELKLVTSQICSKLMERIILECDDMQLKSVFKAFNGFFYNLSCHKYASHVLETLFVRSAALLEKELLTPTFDNETSNEDGEVFGTMENMFLFMLNELKPHLKSMVSHQYASHSLRLLILILSSKMLPSSTKNNSTLRSKKSKIARKMIDIKDNDDFNKVYQTPESFKLELREMLTSLYKQYTHNADSRSDISPTDITKFRELCVDKVASPVIQLIIQIEGIFDRDRAYWRLVFNTNDEKDPKEEAFVEYLLSDSVGSHFLENVIASARLKYVERLYHLYMKDRIVKLAKRDTTGAFVVQAFLKHMKEKDVKQILDDIIPELSILLNSNMDFGTSIINASNRLGCYLKDEVVNQLIKKYYPEESENKNILESCLLLSSSTLGNTRDDWPTADERRRSIFLEQLVNYDDQFLTITIDSMLNLPEERFLQMCYHGVFSHVVESVLQTKRVDTIKRRLLLNVLSKDIVNMSCNAYGSHIADKLWEFTAKLTVYKERIAQALVDETEKVKNSTYGRQVWKNWSLELYVRKRWDWKKLIKEQEHELFPNAVKPQPKNQQFKNNGNDNKRSSDSNYSSSSNFKKQRR.

Over residues 1 to 12 (MAKPRGRKLLKK) the composition is skewed to basic residues. Residues 1–50 (MAKPRGRKLLKKQQKDQFEPSNDVEKFEDDRDHQENVYQGDAADSEKSSD) form a disordered region. Positions 13 to 35 (QQKDQFEPSNDVEKFEDDRDHQE) are enriched in basic and acidic residues. 8 Pumilio repeats span residues 94–129 (EAKG…SVFK), 130–165 (AFNG…ELLT), 193–228 (ELKP…SSTK), 287–331 (DISP…LVFN), 339–374 (KEEA…RLYH), 375–412 (LYMK…QILD), 516–553 (NLPE…RLLL), and 554–592 (NVLS…RIAQ). Positions 639–677 (PNAVKPQPKNQQFKNNGNDNKRSSDSNYSSSSNFKKQRR) are disordered. A compositionally biased stretch (polar residues) spans 646–655 (PKNQQFKNNG).

Belongs to the NOP9 family.

The protein resides in the nucleus. The protein localises to the nucleolus. Functionally, RNA-binding nucleolar protein required for pre-rRNA processing. Involved in production of 18S rRNA and assembly of small ribosomal subunit. In Vanderwaltozyma polyspora (strain ATCC 22028 / DSM 70294 / BCRC 21397 / CBS 2163 / NBRC 10782 / NRRL Y-8283 / UCD 57-17) (Kluyveromyces polysporus), this protein is Nucleolar protein 9 (NOP9).